The following is a 425-amino-acid chain: 3-phosphoshikimate 1-carboxyvinyltransferase (425 aa).

Residues Lys22, Ser23, and Arg27 each coordinate 3-phosphoshikimate. Residue Lys22 coordinates phosphoenolpyruvate. Phosphoenolpyruvate contacts are provided by Gly95 and Arg123. 3-phosphoshikimate is bound by residues Ser169, Ser170, Gln171, Ser197, Asp313, Asn336, and Lys340. Position 171 (Gln171) interacts with phosphoenolpyruvate. Asp313 (proton acceptor) is an active-site residue. Arg344, Arg386, and Lys411 together coordinate phosphoenolpyruvate.

The protein belongs to the EPSP synthase family. In terms of assembly, monomer.

It localises to the cytoplasm. The catalysed reaction is 3-phosphoshikimate + phosphoenolpyruvate = 5-O-(1-carboxyvinyl)-3-phosphoshikimate + phosphate. The protein operates within metabolic intermediate biosynthesis; chorismate biosynthesis; chorismate from D-erythrose 4-phosphate and phosphoenolpyruvate: step 6/7. Catalyzes the transfer of the enolpyruvyl moiety of phosphoenolpyruvate (PEP) to the 5-hydroxyl of shikimate-3-phosphate (S3P) to produce enolpyruvyl shikimate-3-phosphate and inorganic phosphate. The protein is 3-phosphoshikimate 1-carboxyvinyltransferase of Pseudoalteromonas translucida (strain TAC 125).